The following is a 930-amino-acid chain: Carnosine synthase 1 (930 aa).

Residues 1 to 24 are disordered; the sequence is MISVDRLSEEQALGMKEQEWAGPE. Residues 624–825 form the ATP-grasp domain; sequence RPPPAAFSVP…LLLAAVLLAL (202 aa). Position 650–716 (650–716) interacts with ATP; sequence VPFPAVAKLE…MEYVPGTEHD (67 aa). Mg(2+) contacts are provided by Glu-782, Glu-794, and Asn-796. Residues Glu-782, Glu-794, and Asn-796 each coordinate Mn(2+).

As to quaternary structure, homotetramer. Requires Mg(2+) as cofactor. Mn(2+) is required as a cofactor.

The catalysed reaction is beta-alanine + L-histidine + ATP = carnosine + ADP + phosphate + H(+). It catalyses the reaction 4-aminobutanoate + L-histidine + ATP = L-homocarnosine + ADP + phosphate + H(+). Functionally, catalyzes the synthesis of carnosine and homocarnosine. Carnosine is synthesized more efficiently than homocarnosine. This is Carnosine synthase 1 from Gallus gallus (Chicken).